The primary structure comprises 494 residues: MLASGLLLAALLACLTVMILLSVWRQRKLWGKLPPGPTPLPFIGNYLQLNTEQMYDSLMKIRDRYGPVFTIHLGPRRIVVLCGQEAVKEALVDQAEDFSGRGEQATFDWLFKGYGVAFSTWERARPLRRFAISTLRDFGVGKRGIEERIQEEAGFLIEAFRDTRGAFIDPTFFLSRTVSNVISSIVFGDRFDYEDKEFLSLLRMMLGSFQFTATPTGQLYEMFYSVMKHLPGPQQQAFKELEGLRDFIAKKVERNQRTLDPNSPRDFIDSFLIRMQEEKKDPKSEFHMKNLVLTTLNLFFAGTETVSTTMRYGFLLLMKHPDVEAKVHEEIDRVIGRNRQPKFEDRAKMPYTEAVIHEIQRFTDMIPMGLARRVTRDTKFRDFLLPKGTEVFPMLGSVLKDPKFFSKPREFYPQHFLDEKGQFKKSDAFMPFSVGKRYCLGEGLARMELFLFFTTIMQNFRFRSQQAPQDIDVSPKHVGFATIPRTYTMSFVPR.

An N6-acetyllysine modification is found at lysine 379. Cysteine 439 provides a ligand contact to heme.

This sequence belongs to the cytochrome P450 family. The cofactor is heme. Expressed in liver and lung as well as in nasal tissues.

The protein resides in the endoplasmic reticulum membrane. It localises to the microsome membrane. It carries out the reaction an organic molecule + reduced [NADPH--hemoprotein reductase] + O2 = an alcohol + oxidized [NADPH--hemoprotein reductase] + H2O + H(+). In terms of biological role, catalyzes the oxygenation of a variety of substrates, including ethanol and procarcinogens such as N-nitrosodiethylamine and phenacetin. Has no or little activity as a coumarin 7-hydroxylase and in the formation of androstenedione from testosterone. The protein is Cytochrome P450 2A11 (CYP2A11) of Oryctolagus cuniculus (Rabbit).